Here is a 465-residue protein sequence, read N- to C-terminus: MIMPGMEYSTVSKIYGPLMIVQGVKGVAYGEVVEIETESGEKRKGQVLEAREDMAIVQVFEGTRDLDIKTTRVRFTGETLKVPVSMDMLGRIFNGIGKPIDGGPEIIPEDRRDVHGAPLNPVARAYPRDFIQTGISAIDGMNTLVRGQKLPIFSGSGLPHNMLAAQIARQAKVLGEEEQFAVVFAAMGITYEEANFFKKSFEETGAIERAVLFLNLADDPAIERIITPRMALTVAEYLAFDYDMQVLVILTDMTNYAEALREISAAREEVPGRRGYPGYMYTDLATIYERAGRVRGKKGSITQMPILTMPDDDITHPIPDLTGYITEGQIVLSRELHRKGIYPPIDVLPSLSRLMKDGIGKGRTREDHPQLSQQLYAAYAEGRSLRDLVAVVGEEALSETDRKYLKFADRFEREFVAQRYDEDRSIFETLDLGWELLAELPESELKRVRKEYILKYHPKYRKRGE.

The protein belongs to the ATPase alpha/beta chains family. In terms of assembly, has multiple subunits with at least A(3), B(3), C, D, E, F, H, I and proteolipid K(x).

Its subcellular location is the cell membrane. Component of the A-type ATP synthase that produces ATP from ADP in the presence of a proton gradient across the membrane. The B chain is a regulatory subunit. In Thermococcus kodakarensis (strain ATCC BAA-918 / JCM 12380 / KOD1) (Pyrococcus kodakaraensis (strain KOD1)), this protein is A-type ATP synthase subunit B.